We begin with the raw amino-acid sequence, 771 residues long: Probable dipeptidyl peptidase 4 (771 aa).

The signal sequence occupies residues 1 to 16 (MKYSKLLLLLVSVVQA). N-linked (GlcNAc...) asparagine glycans are attached at residues N37, N80, N114, N173, N222, N470, and N495. Residues S618, D695, and H730 each act as charge relay system in the active site.

This sequence belongs to the peptidase S9B family.

It localises to the secreted. The enzyme catalyses Release of an N-terminal dipeptide, Xaa-Yaa-|-Zaa-, from a polypeptide, preferentially when Yaa is Pro, provided Zaa is neither Pro nor hydroxyproline.. In terms of biological role, extracellular dipeptidyl-peptidase which removes N-terminal dipeptides sequentially from polypeptides having unsubstituted N-termini provided that the penultimate residue is proline. The polypeptide is Probable dipeptidyl peptidase 4 (dpp4) (Aspergillus flavus (strain ATCC 200026 / FGSC A1120 / IAM 13836 / NRRL 3357 / JCM 12722 / SRRC 167)).